The sequence spans 234 residues: 2-C-methyl-D-erythritol 4-phosphate cytidylyltransferase (234 aa).

This sequence belongs to the IspD/TarI cytidylyltransferase family. IspD subfamily.

It carries out the reaction 2-C-methyl-D-erythritol 4-phosphate + CTP + H(+) = 4-CDP-2-C-methyl-D-erythritol + diphosphate. Its pathway is isoprenoid biosynthesis; isopentenyl diphosphate biosynthesis via DXP pathway; isopentenyl diphosphate from 1-deoxy-D-xylulose 5-phosphate: step 2/6. Its function is as follows. Catalyzes the formation of 4-diphosphocytidyl-2-C-methyl-D-erythritol from CTP and 2-C-methyl-D-erythritol 4-phosphate (MEP). The chain is 2-C-methyl-D-erythritol 4-phosphate cytidylyltransferase from Photobacterium profundum (strain SS9).